Consider the following 162-residue polypeptide: Endoribonuclease YbeY (162 aa).

3 residues coordinate Zn(2+): His-118, His-122, and His-128.

This sequence belongs to the endoribonuclease YbeY family. Zn(2+) serves as cofactor.

It localises to the cytoplasm. Its function is as follows. Single strand-specific metallo-endoribonuclease involved in late-stage 70S ribosome quality control and in maturation of the 3' terminus of the 16S rRNA. The protein is Endoribonuclease YbeY of Glaesserella parasuis serovar 5 (strain SH0165) (Haemophilus parasuis).